The chain runs to 387 residues: Mannitol-1-phosphate 5-dehydrogenase (387 aa).

NAD(+) is bound at residue 3-14 (ALHFGAGNIGRG).

It belongs to the mannitol dehydrogenase family.

The enzyme catalyses D-mannitol 1-phosphate + NAD(+) = beta-D-fructose 6-phosphate + NADH + H(+). The polypeptide is Mannitol-1-phosphate 5-dehydrogenase (Yersinia pestis bv. Antiqua (strain Antiqua)).